The primary structure comprises 395 residues: Acetate kinase (395 aa).

Asn-7 is a Mg(2+) binding site. ATP is bound at residue Lys-14. Residue Arg-88 participates in substrate binding. The Proton donor/acceptor role is filled by Asp-145. Residues 205-209, 279-281, and 327-331 contribute to the ATP site; these read HLGNG, DFR, and GIGEN. Residue Glu-381 coordinates Mg(2+).

Belongs to the acetokinase family. In terms of assembly, homodimer. Requires Mg(2+) as cofactor. Mn(2+) is required as a cofactor.

The protein localises to the cytoplasm. The enzyme catalyses acetate + ATP = acetyl phosphate + ADP. It participates in metabolic intermediate biosynthesis; acetyl-CoA biosynthesis; acetyl-CoA from acetate: step 1/2. Functionally, catalyzes the formation of acetyl phosphate from acetate and ATP. Can also catalyze the reverse reaction. The polypeptide is Acetate kinase (Campylobacter jejuni subsp. jejuni serotype O:6 (strain 81116 / NCTC 11828)).